The sequence spans 507 residues: RNA-binding protein Nova-1 (507 aa).

The disordered stretch occupies residues 1–44 (MMAAAPIQQNGTHTGVPIDLDPPDSRKRPLEAPPEAGSTKRTNT). A Bipartite nuclear localization signal motif is present at residues 27–43 (KRPLEAPPEAGSTKRTN). One can recognise a KH 1 domain in the interval 49–116 (QYFLKVLIPS…EALNAVHGFI (68 aa)). The tract at residues 139 to 171 (QTTVNPDRIKQTLPSSPTTTKSSPSDPMTTSRA) is disordered. Residues 150-169 (TLPSSPTTTKSSPSDPMTTS) are compositionally biased toward low complexity. Residue serine 154 is modified to Phosphoserine. KH domains lie at 171-237 (ANQV…VELI) and 421-488 (KDVV…QYLI). The required for RNA binding stretch occupies residues 419-503 (GSKDVVEIAV…YEQGVRAANP (85 aa)).

Interacts with PTBP2; the interaction is direct. Expressed in neurons of the cortex, sub-cortex, cerebellum and brainstem (at protein level). Expressed in motor neurons, but not in glia.

It localises to the nucleus. Functionally, functions to regulate alternative splicing in neurons by binding pre-mRNA in a sequence-specific manner to activate exon inclusion or exclusion. It binds specifically to the sequences 5'-YCAY-3' and regulates splicing in only a subset of regulated exons. Binding to an exonic 5'-YCAY-3' cluster changes the protein complexes assembled on pre-mRNA, blocking U1 snRNP binding and exon inclusion, whereas binding to an intronic 5'-YCAY-3' cluster enhances spliceosome assembly and exon inclusion. Binding to 5'-YCAY-3' clusters results in a local and asymmetric action to regulate spliceosome assembly and alternative splicing in neurons. Binding to an exonic 5'-YCAY-3' cluster changed the protein complexes assembled on pre-mRNA, blocking U1 snRNP (small nuclear ribonucleoprotein) binding and exon inclusion, whereas binding to an intronic 5'-YCAY-3' cluster enhanced spliceosome assembly and exon inclusion. With NOVA1, they perform unique biological functions in different brain areas and cell types. Autoregulates its own expression by acting as a splicing repressor. Acts to activate the inclusion of exon E3A in the glycine receptor alpha-2 chain and of exon E9 in gamma-aminobutyric-acid receptor gamma-2 subunit via a distal downstream UCAU-rich intronic splicing enhancer. Acts to regulate a novel glycine receptor alpha-2 chain splice variant (alpha-2N) in developing spinal cord. In Mus musculus (Mouse), this protein is RNA-binding protein Nova-1.